The chain runs to 111 residues: DIVLTQSPASLAVSLGQRATISCRASESVDNYGISFMNWFQQKPGQPPKLLIYAASNQGSGVPARFSGSGSGTDFSLNIHPMEEDDTAMYFCQQSKEVPWTFGGGTKLEIK.

The framework-1 stretch occupies residues 1 to 23 (DIVLTQSPASLAVSLGQRATISC). A disulfide bridge links C23 with C92. Positions 24–38 (RASESVDNYGISFMN) are complementarity-determining-1. Residues 39–53 (WFQQKPGQPPKLLIY) form a framework-2 region. The complementarity-determining-2 stretch occupies residues 54–60 (AASNQGS). Positions 61–92 (GVPARFSGSGSGTDFSLNIHPMEEDDTAMYFC) are framework-3. Residues 93 to 101 (QQSKEVPWT) form a complementarity-determining-3 region. Residues 102 to 111 (FGGGTKLEIK) are framework-4.

The sequence is that of Ig kappa chain V-III region PC 2880/PC 1229 from Mus musculus (Mouse).